A 710-amino-acid polypeptide reads, in one-letter code: Amyloid beta precursor protein binding family B member 1 (710 aa).

Position 135 is a phosphoserine (Ser-135). 2 disordered regions span residues 143–256 (EQGP…SDLP) and 276–300 (GTTQWEPPGRASPSQGSSPQEESQL). Positions 145–173 (GPDEGEEKAAGEAEEDDEDEEEEEEEEDL) are enriched in acidic residues. The residue at position 204 (Lys-204) is an N6-acetyllysine. Over residues 223 to 234 (SWATLSQGSPSY) the composition is skewed to polar residues. Positions 253–285 (SDLPAGWMRVQDTSGTYYWHIPTGTTQWEPPGR) constitute a WW domain. Positions 287–299 (SPSQGSSPQEESQ) are enriched in low complexity. Residues 370–509 (FAVRSLGWVE…SKIMSERRNA (140 aa)) form the PID 1 domain. Position 459 is a phosphoserine; by PKC (Ser-459). Residue Ser-517 is modified to Phosphoserine. The 158-residue stretch at 542 to 699 (KFQVYYLGNV…RRGVQSLWGS (158 aa)) folds into the PID 2 domain. Tyr-547 carries the post-translational modification Phosphotyrosine; by ABL1. Ser-610 bears the Phosphoserine; by SGK1 mark. An N6-acetyllysine modification is found at Lys-701.

In terms of assembly, component of a complex, at least composed of APBB1, RASD1/DEXRAS1 and APP. Interacts (via PID domain 2) with APP (with the intracellular domain of the amyloid-beta precursor protein). Interacts (via PID domain 2) with RASD1/DEXRAS1; impairs the transcription activation activity. Interacts (via PID domain 1) with KAT5/TIP60. Interacts (via the WW domain) with the proline-rich region of APBB1IP. Interacts with TSHZ1 and TSHZ2. Interacts (via the WW domain) with histone H2AX (when phosphorylated on 'Tyr-142') and the proline-rich region of ENAH. Interacts with MAPK8. Interacts (via PID domain 1) with TSHZ3 (via homeobox domain). Interacts with SET. Found in a trimeric complex with HDAC1 and TSHZ3; the interaction between HDAC1 and APBB1 is mediated by TSHZ3. Interacts (via WWW domain) with NEK6. Interacts (via WWW domain) with ABL1. Interacts with RNF157. Interacts with ARF6. Polyubiquitination by RNF157 leads to degradation by the proteasome. Post-translationally, phosphorylation at Ser-610 by SGK1 promotes its localization to the nucleus. Phosphorylated following nuclear translocation. Phosphorylation at Tyr-546 by ABL1 enhances transcriptional activation activity and reduces the affinity for RASD1/DEXRAS1. In terms of processing, acetylation at Lys-204 and Lys-701 by KAT5 promotes its transcription activator activity. Phosphorylated at Ser-459 by PKC upon insulin activation. In terms of tissue distribution, expressed in the brain, retinal lens and muscle cells (at protein level).

It is found in the cell membrane. Its subcellular location is the cytoplasm. The protein localises to the nucleus. The protein resides in the cell projection. It localises to the growth cone. It is found in the nucleus speckle. Functionally, transcription coregulator that can have both coactivator and corepressor functions. Adapter protein that forms a transcriptionally active complex with the gamma-secretase-derived amyloid precursor protein (APP) intracellular domain. Plays a central role in the response to DNA damage by translocating to the nucleus and inducing apoptosis. May act by specifically recognizing and binding histone H2AX phosphorylated on 'Tyr-142' (H2AXY142ph) at double-strand breaks (DSBs), recruiting other pro-apoptosis factors such as MAPK8/JNK1. Required for histone H4 acetylation at double-strand breaks (DSBs). Its ability to specifically bind modified histones and chromatin modifying enzymes such as KAT5/TIP60, probably explains its transcription activation activity. Functions in association with TSHZ3, SET and HDAC factors as a transcriptional repressor, that inhibits the expression of CASP4. Associates with chromatin in a region surrounding the CASP4 transcriptional start site(s). Involved in hippocampal neurite branching and neuromuscular junction formation, as a result plays a role in spatial memory functioning. Plays a role in the maintenance of lens transparency. May play a role in muscle cell strength. Acts as a molecular adapter that functions in neurite outgrowth by activating the RAC1-ARF6 axis upon insulin treatment. The chain is Amyloid beta precursor protein binding family B member 1 from Mus musculus (Mouse).